A 448-amino-acid polypeptide reads, in one-letter code: DEAD-box ATP-dependent RNA helicase CshB (448 aa).

A Q motif motif is present at residues 4-32 (HPFEQFNLESSLIDAVKDLNFEKPTEIQN). The Helicase ATP-binding domain maps to 35–206 (IPRILKRTNL…NKYLSHPEYV (172 aa)). 48 to 55 (SQTGTGKS) provides a ligand contact to ATP. The DEAD box motif lies at 154–157 (DEAD). The Helicase C-terminal domain maps to 236–386 (NLIDILNPYL…EVKAHNQRQA (151 aa)). Over residues 400–418 (NKVRSKIKNKVKPGYKKKF) the composition is skewed to basic residues. The disordered stretch occupies residues 400–448 (NKVRSKIKNKVKPGYKKKFKQEVEKMKRQERKQFSKQQNRQKRKQNKKG). Basic and acidic residues predominate over residues 419-432 (KQEVEKMKRQERKQ). Over residues 438 to 448 (NRQKRKQNKKG) the composition is skewed to basic residues.

Belongs to the DEAD box helicase family. CshB subfamily.

It is found in the cytoplasm. The catalysed reaction is ATP + H2O = ADP + phosphate + H(+). Probable DEAD-box RNA helicase. May work in conjunction with the cold shock proteins to ensure proper initiation of transcription at low and optimal temperatures. This chain is DEAD-box ATP-dependent RNA helicase CshB, found in Staphylococcus aureus (strain NCTC 8325 / PS 47).